Here is an 816-residue protein sequence, read N- to C-terminus: H(+)/Cl(-) exchange transporter 5 (816 aa).

The Cytoplasmic portion of the chain corresponds to 1 to 124; the sequence is MAMWQGAMDN…WALIHSVSDA (124 aa). 2 helical membrane-spanning segments follow: residues 125–162 and 208–231; these read FSGWLLMLLIGLLSGSLAGLIDISAHWMTDLKEGICTG and VNYFMYVLWALLFAFLAVSLVKAF. The Selectivity filter part_1 motif lies at 237-241; the sequence is GSGIP. A chloride-binding site is contributed by S238. Residues 240 to 247 constitute an intramembrane region (helical); it reads IPEIKTIL. 2 helical membrane-spanning segments follow: residues 256–275 and 281–300; these read LGKWTLVIKTITLVLAVSSG and EGPLVHVACCCGNILCHCFN. Positions 279-283 match the Selectivity filter part_2 motif; sequence GKEGP. 2 consecutive intramembrane regions (helical) follow at residues 312-324 and 328-336; these read VLSAAAAAGVSVA and PIGGVLFSL. 5 helical membrane passes run 348–366, 389–414, 422–442, 498–518, and 523–542; these read LWRSFFAALVAAFTLRSIN, LVPFIVLGIFGGLWGALFIRTNIAWC, LGKYPVVEVLIVTAITAILAF, MWQLALTLILKIVITIFTFGM, and GLFIPSMAVGAIAGRLLGVG. A Selectivity filter part_3 motif is present at residues 523-527; it reads GLFIP. F525 serves as a coordination point for chloride. Residues 570–584 constitute an intramembrane region (helical); that stretch reads GLYAMVGAAACLGGV. The segment at residues 585–587 is an intramembrane region (note=Loop between two helices); it reads TRM. Residues 588–599 constitute an intramembrane region (helical); sequence TVSLVVIMFELT. An intramembrane region (note=Loop between two helices) is located at residues 600–604; it reads GGLEY. The chain crosses the membrane as a helical span at residues 605–622; it reads IVPLMAAAMTSKWVADAL. Residues 623-816 are Cytoplasmic-facing; it reads GREGIYDAHI…NQDPDSILFN (194 aa). Y628 contacts chloride. CBS domains follow at residues 656 to 720 and 752 to 812; these read MKPR…ARKK and ILDL…DPDS. Residues T666, 687-689, and 794-797 each bind ATP; these read YSG and TKKD.

This sequence belongs to the chloride channel (TC 2.A.49) family. ClC-5/CLCN5 subfamily. In terms of assembly, interacts with NEDD4 and NEDD4L. Ubiquitinated by NEDD4L in the presence of albumin; which promotes endocytosis and proteasomal degradation. Kidney specific.

The protein resides in the golgi apparatus membrane. It is found in the endosome membrane. It localises to the cell membrane. It catalyses the reaction 2 chloride(in) + H(+)(out) = 2 chloride(out) + H(+)(in). Proton-coupled chloride transporter. Functions as antiport system and exchanges chloride ions against protons. Important for normal acidification of the endosome lumen. May play an important role in renal tubular function. The CLC channel family contains both chloride channels and proton-coupled anion transporters that exchange chloride or another anion for protons. The absence of conserved gating glutamate residues is typical for family members that function as channels. This is H(+)/Cl(-) exchange transporter 5 (Clcn5) from Mus musculus (Mouse).